The chain runs to 43 residues: Mu-conotoxin-like CalTx 12.2.1E (43 aa).

Arg1 is a propeptide. 4 disulfides stabilise this stretch: Cys4–Cys16, Cys11–Cys24, Cys18–Cys29, and Cys23–Cys35. A 6'-bromotryptophan modification is found at Trp31. Pro36 is subject to 4-hydroxyproline. Trp40 bears the 6'-bromotryptophan mark.

As to expression, expressed by the venom duct.

It is found in the secreted. Mu-conotoxins block voltage-gated sodium channels. This toxin reversibly blocks voltage-gated sodium channel in cephalopods, with no alteration in the voltage dependence of sodium conductance or on the kinetics of inactivation. In Californiconus californicus (California cone), this protein is Mu-conotoxin-like CalTx 12.2.1E.